Consider the following 102-residue polypeptide: Hemoglobin subunit beta-Z (102 aa).

The Globin domain maps to 1–102 (FGNLSSAQAI…VANALSHKYH (102 aa)). The heme b site is built by histidine 19 and histidine 48.

The protein belongs to the globin family. In terms of assembly, heterotetramer of two alpha chains and two beta chains.

Functionally, this is an embryonic beta chain. The chain is Hemoglobin subunit beta-Z (HBBZ) from Mesocricetus auratus (Golden hamster).